We begin with the raw amino-acid sequence, 421 residues long: Leucine-rich repeat-containing protein 42 (421 aa).

5 LRR repeats span residues 149–170 (VLCSLCLRNRYLVVAEKLEEIK), 174–195 (ELTRLDLSCCWLGDEHELLEHL), 202–222 (SVTQLHLKDNCLSDAGIRKMT), 234–255 (NLALLDLSCNPEITDAGIGYLF), and 259–280 (KLNCLDISGTGLKDIKAVKDKL). Residues 376 to 406 (PLLSQESKKSKKRAFKESEQEQSSPQSAKQK) form a disordered region. The span at 396 to 406 (EQSSPQSAKQK) shows a compositional bias: low complexity. Phosphoserine is present on S399.

The protein belongs to the LRRC42 family.

This chain is Leucine-rich repeat-containing protein 42 (Lrrc42), found in Mus musculus (Mouse).